Here is a 352-residue protein sequence, read N- to C-terminus: Thymidine kinase (352 aa).

Gly-26–Thr-33 provides a ligand contact to ATP. Glu-54 serves as the catalytic Proton acceptor. Substrate is bound at residue Gln-95. ATP is bound at residue Arg-185. Arg-191 is a binding site for substrate.

This sequence belongs to the herpesviridae thymidine kinase family. In terms of assembly, homodimer.

It carries out the reaction thymidine + ATP = dTMP + ADP + H(+). In terms of biological role, catalyzes the transfer of the gamma-phospho group of ATP to thymidine to generate dTMP in the salvage pathway of pyrimidine synthesis. The dTMP serves as a substrate for DNA polymerase during viral DNA replication. Allows the virus to be reactivated and to grow in non-proliferative cells lacking a high concentration of phosphorylated nucleic acid precursors. This is Thymidine kinase from Gallus gallus (Chicken).